The primary structure comprises 136 residues: Large ribosomal subunit protein uL16c (136 aa).

Residues M1–M17 are compositionally biased toward basic residues. The tract at residues M1 to N25 is disordered.

This sequence belongs to the universal ribosomal protein uL16 family. Part of the 50S ribosomal subunit.

The protein resides in the plastid. The protein localises to the chloroplast. The sequence is that of Large ribosomal subunit protein uL16c from Anthoceros angustus (Hornwort).